Reading from the N-terminus, the 200-residue chain is Ribonuclease T2 (200 aa).

A disulfide bridge connects residues Cys-17 and Cys-22. His-32 is an active-site residue. Residues Cys-42 and Cys-89 are joined by a disulfide bond. N-linked (GlcNAc...) asparagine glycans are attached at residues Asn-43 and Asn-73. Active-site residues include Glu-82 and His-86. Asn-116 carries an N-linked (GlcNAc...) asparagine glycan. Disulfide bonds link Cys-152–Cys-188 and Cys-170–Cys-180.

This sequence belongs to the RNase T2 family.

Its subcellular location is the secreted. It is found in the lysosome lumen. The protein localises to the endoplasmic reticulum lumen. The protein resides in the mitochondrion intermembrane space. The enzyme catalyses a ribonucleotidyl-ribonucleotide-RNA + H2O = a 3'-end 3'-phospho-ribonucleotide-RNA + a 5'-end dephospho-ribonucleoside-RNA + H(+). It carries out the reaction an adenylyl-uridine-RNA = a 3'-end 2',3'-cyclophospho-AMP-RNA + a 5'-end dephospho-uridine-RNA. It catalyses the reaction a guanylyl-uridine-RNA = a 3'-end 2',3'-cyclophospho-GMP-RNA + a 5'-end dephospho-uridine-RNA. Inhibited by Zn(2+) and Cu(2+). Ribonuclease that plays an essential role in innate immune response by recognizing and degrading RNAs from microbial pathogens that are subsequently sensed by TLR8. Cleaves preferentially single-stranded RNA molecules between purine and uridine residues, which critically contributes to the supply of catabolic uridine and the generation of purine-2',3'-cyclophosphate-terminated oligoribonucleotides. In turn, RNase T2 degradation products promote the RNA-dependent activation of TLR8. In plasmacytoid dendritic cells, it cooperates with PLD3 or PLD4 5'-&gt;3' exonucleases to process RNA fragments and release 2',3'-cyclic guanosine monophosphate (2',3'-cGMP), a potent stimulatory ligand for TLR7. Also plays a key role in degradation of mitochondrial RNA and processing of non-coding RNA imported from the cytosol into mitochondria. Participates as well in degradation of mitochondrion-associated cytosolic rRNAs. In Sus scrofa (Pig), this protein is Ribonuclease T2 (RNASET2).